The chain runs to 320 residues: Aspartate carbamoyltransferase catalytic subunit (320 aa).

Carbamoyl phosphate is bound by residues Arg-58 and Thr-59. Lys-86 serves as a coordination point for L-aspartate. Carbamoyl phosphate contacts are provided by Arg-108, His-136, and Gln-139. Arg-169 and Arg-223 together coordinate L-aspartate. Positions 264 and 265 each coordinate carbamoyl phosphate.

The protein belongs to the aspartate/ornithine carbamoyltransferase superfamily. ATCase family. In terms of assembly, heterododecamer (2C3:3R2) of six catalytic PyrB chains organized as two trimers (C3), and six regulatory PyrI chains organized as three dimers (R2).

The enzyme catalyses carbamoyl phosphate + L-aspartate = N-carbamoyl-L-aspartate + phosphate + H(+). It participates in pyrimidine metabolism; UMP biosynthesis via de novo pathway; (S)-dihydroorotate from bicarbonate: step 2/3. Catalyzes the condensation of carbamoyl phosphate and aspartate to form carbamoyl aspartate and inorganic phosphate, the committed step in the de novo pyrimidine nucleotide biosynthesis pathway. This is Aspartate carbamoyltransferase catalytic subunit from Cereibacter sphaeroides (strain ATCC 17029 / ATH 2.4.9) (Rhodobacter sphaeroides).